The sequence spans 496 residues: Probable cytosol aminopeptidase (496 aa).

Mn(2+) is bound by residues Lys-251 and Asp-256. The active site involves Lys-263. Residues Asp-274, Asp-333, and Glu-335 each contribute to the Mn(2+) site. Arg-337 is an active-site residue.

This sequence belongs to the peptidase M17 family. The cofactor is Mn(2+).

The protein localises to the cytoplasm. The enzyme catalyses Release of an N-terminal amino acid, Xaa-|-Yaa-, in which Xaa is preferably Leu, but may be other amino acids including Pro although not Arg or Lys, and Yaa may be Pro. Amino acid amides and methyl esters are also readily hydrolyzed, but rates on arylamides are exceedingly low.. It catalyses the reaction Release of an N-terminal amino acid, preferentially leucine, but not glutamic or aspartic acids.. In terms of biological role, presumably involved in the processing and regular turnover of intracellular proteins. Catalyzes the removal of unsubstituted N-terminal amino acids from various peptides. The sequence is that of Probable cytosol aminopeptidase from Acidovorax sp. (strain JS42).